The primary structure comprises 374 residues: Alcohol dehydrogenase class-3 (374 aa).

Residue Ala2 is modified to N-acetylalanine. Residues Cys45, His67, Cys97, Cys100, Cys103, Cys111, and Cys174 each coordinate Zn(2+). Lys233 is subject to N6-succinyllysine. The residue at position 247 (Ser247) is a Phosphoserine. Lys315 is subject to N6-succinyllysine. Residue Ser324 is modified to Phosphoserine.

Belongs to the zinc-containing alcohol dehydrogenase family. Class-III subfamily. Homodimer. Zn(2+) is required as a cofactor.

Its subcellular location is the cytoplasm. It carries out the reaction a primary alcohol + NAD(+) = an aldehyde + NADH + H(+). It catalyses the reaction a secondary alcohol + NAD(+) = a ketone + NADH + H(+). The enzyme catalyses S-(hydroxymethyl)glutathione + NADP(+) = S-formylglutathione + NADPH + H(+). The catalysed reaction is S-(hydroxymethyl)glutathione + NAD(+) = S-formylglutathione + NADH + H(+). It carries out the reaction 20-oxo-(5Z,8Z,11Z,14Z)-eicosatetraenoate + NAD(+) + H2O = (5Z,8Z,11Z,14Z)-eicosatetraenedioate + NADH + 2 H(+). It catalyses the reaction 20-hydroxy-(5Z,8Z,11Z,14Z)-eicosatetraenoate + NAD(+) = 20-oxo-(5Z,8Z,11Z,14Z)-eicosatetraenoate + NADH + H(+). The enzyme catalyses S-nitrosoglutathione + NADH + H(+) = S-(hydroxysulfenamide)glutathione + NAD(+). In terms of biological role, catalyzes the oxidation of long-chain primary alcohols and the oxidation of S-(hydroxymethyl) glutathione. Also oxidizes long chain omega-hydroxy fatty acids, such as 20-HETE, producing both the intermediate aldehyde, 20-oxoarachidonate and the end product, a dicarboxylic acid, (5Z,8Z,11Z,14Z)-eicosatetraenedioate. Class-III ADH is remarkably ineffective in oxidizing ethanol. Required for clearance of cellular formaldehyde, a cytotoxic and carcinogenic metabolite that induces DNA damage. Also acts as a S-nitroso-glutathione reductase by catalyzing the NADH-dependent reduction of S-nitrosoglutathione, thereby regulating protein S-nitrosylation. In Bos taurus (Bovine), this protein is Alcohol dehydrogenase class-3.